A 175-amino-acid chain; its full sequence is NADH-ubiquinone oxidoreductase chain 6 (175 aa).

Helical transmembrane passes span 1-21 (MMTY…VGFS), 25-45 (SPIY…GIIM), 47-67 (FGGS…MLVV), 88-108 (TVMG…LYVL), and 149-169 (YGAW…LVIL).

The protein belongs to the complex I subunit 6 family. In terms of assembly, core subunit of respiratory chain NADH dehydrogenase (Complex I) which is composed of 45 different subunits.

It is found in the mitochondrion inner membrane. It carries out the reaction a ubiquinone + NADH + 5 H(+)(in) = a ubiquinol + NAD(+) + 4 H(+)(out). Functionally, core subunit of the mitochondrial membrane respiratory chain NADH dehydrogenase (Complex I) which catalyzes electron transfer from NADH through the respiratory chain, using ubiquinone as an electron acceptor. Essential for the catalytic activity and assembly of complex I. In Equus asinus (Donkey), this protein is NADH-ubiquinone oxidoreductase chain 6 (MT-ND6).